Reading from the N-terminus, the 537-residue chain is Cytochrome P450 27C1 (537 aa).

Cys483 contributes to the heme binding site.

Belongs to the cytochrome P450 family. Requires heme as cofactor. Expressed in the dorsal third of retinal pigment epithelium, but not in the ventral counterpart (at protein level).

The protein resides in the membrane. It catalyses the reaction all-trans-retinol + 2 reduced [adrenodoxin] + O2 + 2 H(+) = all-trans-3,4-didehydroretinol + 2 oxidized [adrenodoxin] + 2 H2O. Its function is as follows. Efficiently catalyzes the conversion of all-trans retinol (also called vitamin A1, the precursor of 11-cis retinal) to 3,4-didehydroretinol (also called vitamin A2, the precursor of 11-cis 3,4-didehydroretinal), also acts on all-trans retinal and all-trans retinoic acid. The replacement of 11-cis retinal chromophore in photopigments with 11-cis 3,4-didehydroretinal enhances sensitivity to long-wavelength light. This may improve vision in fresh water which is often turbid. The sequence is that of Cytochrome P450 27C1 (cyp27c1) from Aquarana catesbeiana (American bullfrog).